Consider the following 1160-residue polypeptide: MDKLERIELESQVCNELERFIGSGDKLLAEFVIGLADENPKLKDFNKAISENVPDFPESLSSHLFNLIEKMKKKTTTTTNNNNNNNNNNTNTAKTTTTTTTTTTTTNNNNYKESEWEETKLNSNSNNQKKNQFPGLSIPNKVEWDQGKIVDVPIDDEKTKEELKRKQQDMDREFEREQREKRDRDREQQNKRREIDKEPILYKIYDGKVSSINDYGCFVTLEGIAGRRDGLVHISQILSGRTKLNHPSDVVKRNQQVKVKILSVASSKISLSMKDVDQSTGRDLNPQQNIQSIISTNSTNNRSNPFKPNNNNNNSSNNNNNDDDDKYTTSKNRKRIASPDRWGYKQLIASGILSVPEMPNYDKEVGLVNHDEEQPEEDFDIERNEDEPQFLKGTRMNMQQLSPIKIVKKPNGSLQRAASTQTALSKERKEEKNQQRNEMMDSIPKDLSLPWHDPMPEAGERHLAQEIRSIAGQGIDTEIPEWKKVTQGSHIQYGKATSRSIKEQRESLPIFPLREAFLQAVSEHQLLVVIGETGSGKTTQMAQYLAEAGYGTRGKIGCTQPRRVAAMSVSKRVAEEFGCQLGQEVGYAIRFEDCTSPETIIKFMTDGILLRECLLDPNLSAYSVIILDEAHERTISTDVLFGLLKQALQRRPELKVLITSATLEAEKFSKYFMNAQLFIIPGRTFPVDIRYTKDPEADYLDASLITVMQIHLSEPPGDILLFLTGQEEIDAACQILYERMKSLGSNVPDLIILPVYSALPSEMQTKIFEPAPPGSRKVVIATNIAETSLTIDGIYYVIDPGFSKQKCFNPKNGMDSLVVAPISQAAARQRSGRAGRTGPGKCYRLYTESAFKNEMLASSIPEIQRTNLGNTVLTMKAMGINDLLNFDFMDPPPVQTLVSAMEQLYSLGALDEEGLLTRLGRKMAEFPLDPQLSKMLIASVDLGCSDEILTVVAMLSVQNVFYRPKEKQALADQKKAKFFQPEGDHLTLLNVYESWKNSKFSNPWCFENFVQARSLRRAQDVRKQLITIMDRYKLDIISAGRNYTKIQKAICSGFFANASKKDPNEGYKTLVEGQPVYIHPSSTLFNRNPDWVIYHELVMTTKEYMREVCTIDPKWLVELAPKFFKTSDPNKISKRKRKEKIEPLYDKYNDPNAWRPSKRK.

Disordered stretches follow at residues 75 to 140 and 153 to 192; these read TTTT…SIPN and PIDD…QNKR. Low complexity-rich tracts occupy residues 76–110 and 122–132; these read TTTT…NNNN and NSNSNNQKKNQ. Positions 155–192 are enriched in basic and acidic residues; the sequence is DDEKTKEELKRKQQDMDREFEREQREKRDRDREQQNKR. An S1 motif domain is found at 202-274; that stretch reads YKIYDGKVSS…ASSKISLSMK (73 aa). The segment covering 294–320 has biased composition (low complexity); sequence ISTNSTNNRSNPFKPNNNNNNSSNNNN. Disordered regions lie at residues 294–334 and 409–438; these read ISTN…KNRK and KPNG…QRNE. Residues 412 to 424 show a composition bias toward polar residues; the sequence is GSLQRAASTQTAL. Over residues 425-438 the composition is skewed to basic and acidic residues; sequence SKERKEEKNQQRNE. One can recognise a Helicase ATP-binding domain in the interval 518–681; sequence LQAVSEHQLL…FMNAQLFIIP (164 aa). 531-538 is a binding site for ATP; that stretch reads GETGSGKT. Positions 628–631 match the DEAH box motif; the sequence is DEAH. One can recognise a Helicase C-terminal domain in the interval 699–879; that stretch reads YLDASLITVM…NTVLTMKAMG (181 aa).

The protein belongs to the DEAD box helicase family. DEAH subfamily. DDX8/PRP22 sub-subfamily. Identified in the spliceosome complex.

It localises to the nucleus. It catalyses the reaction ATP + H2O = ADP + phosphate + H(+). Facilitates nuclear export of spliced mRNA by releasing the RNA from the spliceosome. The protein is ATP-dependent RNA helicase dhx8 (dhx8) of Dictyostelium discoideum (Social amoeba).